The primary structure comprises 401 residues: Argininosuccinate synthase (401 aa).

ATP is bound at residue 8 to 16 (AYSGGLDTS). Position 85 (Tyr85) interacts with L-citrulline. Position 115 (Gly115) interacts with ATP. L-aspartate-binding residues include Thr117, Asn121, and Asp122. Asn121 contributes to the L-citrulline binding site. L-citrulline-binding residues include Arg125, Ser173, Glu258, and Tyr270.

The protein belongs to the argininosuccinate synthase family. Type 1 subfamily. In terms of assembly, homotetramer.

It is found in the cytoplasm. The catalysed reaction is L-citrulline + L-aspartate + ATP = 2-(N(omega)-L-arginino)succinate + AMP + diphosphate + H(+). Its pathway is amino-acid biosynthesis; L-arginine biosynthesis; L-arginine from L-ornithine and carbamoyl phosphate: step 2/3. This is Argininosuccinate synthase from Staphylococcus epidermidis (strain ATCC 35984 / DSM 28319 / BCRC 17069 / CCUG 31568 / BM 3577 / RP62A).